The following is a 231-amino-acid chain: MAKWVPALLLRRVPLFSLRFRPASSTFLPVLAATEPAVSVPSGDLSMPVKTRAEGEDDGFGEAGDPRRLLERPWRFRGCLPGKGNRDVGFEGTEGPTSTRPEWVWSCRCCLGCRASTRERVTSPVRAAGPQPRFTDRETEAAAGTLAHMGFAPPTSFSHFTDQELRDCSSLECLGVVEGDPHVLCSTLSLSRPSPSATLTLLLASSCLLAPAPPSFILLLFTLIAPDLPHS.

An N-terminal signal peptide occupies residues 1-25 (MAKWVPALLLRRVPLFSLRFRPASS). Topologically, residues 26–200 (TFLPVLAATE…SRPSPSATLT (175 aa)) are extracellular. A disordered region spans residues 39–64 (SVPSGDLSMPVKTRAEGEDDGFGEAG). Residues 201-225 (LLLASSCLLAPAPPSFILLLFTLIA) traverse the membrane as a helical segment. Over 226 to 231 (PDLPHS) the chain is Cytoplasmic.

Its subcellular location is the membrane. This is an uncharacterized protein from Homo sapiens (Human).